We begin with the raw amino-acid sequence, 465 residues long: Cysteine--tRNA ligase (465 aa).

Residue Cys-29 participates in Zn(2+) binding. The 'HIGH' region signature appears at 31–41 (ITPYDEVHLGH). 3 residues coordinate Zn(2+): Cys-212, His-237, and Glu-241. A 'KMSKS' region motif is present at residues 269 to 273 (KMSKS). Lys-272 serves as a coordination point for ATP.

This sequence belongs to the class-I aminoacyl-tRNA synthetase family. In terms of assembly, monomer. Zn(2+) serves as cofactor.

The protein resides in the cytoplasm. The enzyme catalyses tRNA(Cys) + L-cysteine + ATP = L-cysteinyl-tRNA(Cys) + AMP + diphosphate. In Endomicrobium trichonymphae, this protein is Cysteine--tRNA ligase.